A 254-amino-acid chain; its full sequence is 3-deoxy-manno-octulosonate cytidylyltransferase (254 aa).

It belongs to the KdsB family.

The protein resides in the cytoplasm. The catalysed reaction is 3-deoxy-alpha-D-manno-oct-2-ulosonate + CTP = CMP-3-deoxy-beta-D-manno-octulosonate + diphosphate. It participates in nucleotide-sugar biosynthesis; CMP-3-deoxy-D-manno-octulosonate biosynthesis; CMP-3-deoxy-D-manno-octulosonate from 3-deoxy-D-manno-octulosonate and CTP: step 1/1. The protein operates within bacterial outer membrane biogenesis; lipopolysaccharide biosynthesis. In terms of biological role, activates KDO (a required 8-carbon sugar) for incorporation into bacterial lipopolysaccharide in Gram-negative bacteria. This chain is 3-deoxy-manno-octulosonate cytidylyltransferase, found in Pseudomonas entomophila (strain L48).